We begin with the raw amino-acid sequence, 203 residues long: Large ribosomal subunit protein bL25 (203 aa).

This sequence belongs to the bacterial ribosomal protein bL25 family. CTC subfamily. In terms of assembly, part of the 50S ribosomal subunit; part of the 5S rRNA/L5/L18/L25 subcomplex. Contacts the 5S rRNA. Binds to the 5S rRNA independently of L5 and L18.

Its function is as follows. This is one of the proteins that binds to the 5S RNA in the ribosome where it forms part of the central protuberance. The protein is Large ribosomal subunit protein bL25 of Wolbachia pipientis wMel.